Consider the following 303-residue polypeptide: Probable 5-dehydro-4-deoxyglucarate dehydratase (303 aa).

It belongs to the DapA family.

It catalyses the reaction 5-dehydro-4-deoxy-D-glucarate + H(+) = 2,5-dioxopentanoate + CO2 + H2O. It participates in carbohydrate acid metabolism; D-glucarate degradation; 2,5-dioxopentanoate from D-glucarate: step 2/2. This chain is Probable 5-dehydro-4-deoxyglucarate dehydratase, found in Ectopseudomonas mendocina (strain ymp) (Pseudomonas mendocina).